A 527-amino-acid polypeptide reads, in one-letter code: Monooxygenase aurF (527 aa).

Positions 1-19 (MPNPTVAIVGLGALGLVTL) are cleaved as a signal peptide. An N-linked (GlcNAc...) asparagine glycan is attached at Asn-59.

This sequence belongs to the FMO family. Might be part of an extracellular enzyme complex composed of GIP1, aurF, aurO and aurS. The cofactor is FAD.

Its subcellular location is the secreted. The protein localises to the extracellular space. It functions in the pathway pigment biosynthesis. Monooxygenase; part of the gene cluster that mediates the biosynthesis of aurofusarin, a red mycelium pigment which is acting as a mycotoxin. The first step is performed by the polyketide synthase which condenses one acetyl-CoA and 6 malonyl-CoA units to form the first intermediate, the cyclic heptaketide and yellow pigment YWA1. The C2 hydroxyl group in the pyrone ring of YWA1 is probably formed during ring closure by an aldol-type cyclization reaction. The dehydratase aurZ then acts as the first tailoring enzyme in the aurofusarin biosynthetic pathway by converting YWA1 to nor-rubrofusarin. Nor-rubrofusarin is then methylated to rubrofusarin by the O-methyltransferase aurJ. Rubrofusarin is then transported across the plasma membrane by the rubrofusarin-specific pump aurT for further enzymatic processing by the extracellular complex composed of GIP1, aurF, aurO and aurS to yield aurofusarin. This chain is Monooxygenase aurF, found in Gibberella zeae (strain ATCC MYA-4620 / CBS 123657 / FGSC 9075 / NRRL 31084 / PH-1) (Wheat head blight fungus).